We begin with the raw amino-acid sequence, 1181 residues long: Poly [ADP-ribose] polymerase tankyrase (1181 aa).

ANK repeat units lie at residues 56–85 (RKSTPLHFAAGYGRREVVEFLLNSGASIQA), 89–118 (GGLHPLHNCCSFGHAEVVRLLLKAGASPNT), 122–151 (WNYTPLHEAASKGKVDVCLALLQHGANHTI), 209–238 (RRSTPLHLAAGYNRIGIVEILLANGADVHA), 242–271 (GGLVPLHNACSYGHFDVTKLLIQAGANVNA), 275–304 (WAFTPLHEAASKSRVEVCSLLLSRGADPTL), 362–394 (TGDTPLHLAVVSPDGKRKQLMELLTRKGSLLNE), 398–427 (AFLTPLHLAAELLHYDAMEVLLKQGAKVNA), 431–458 (LGQTPLHRCARDEQAVRLLLSYAADTNI), 483–513 (DSETHLLEAAKAGDLDTVRRIVLNNPISVNC), 519–548 (RHSTPLHFAAGFNRVPVVQFLLEHGAEVYA), 552–581 (GGLVPLHNACSYGHYEVTELLVKHGANVNV), 585–614 (WKFTPLHEAAAKGKYDICKLLLKHGADPMK), 638–668 (RGPSALLDAAKKGNLARVQRLVTPESINCRD), 672–701 (RNSTPLHLAAGYNNFECAEYLLENGADVNA), 705–734 (GGLIPLHNASSYGHLDIAALLIKHKTVVNA), 738–767 (WGFTPLHEAAQKGRTQLCSLLLAHGADAYM), and 771–799 (EGQTPIELATADDVKCLLQDAMATSLSQQ). Disordered regions lie at residues 807 to 834 (SLTSSSPAPDATAAAAPGTSSSSSSAIL) and 864 to 886 (RISPAQGAEANGAEGSSSDDLLP). Positions 889–952 (DTITNVSGFL…LKGIAQLRST (64 aa)) constitute an SAM domain. Positions 969–1174 (LPDDKEFVAV…YQIVKPDDSS (206 aa)) constitute a PARP catalytic domain. Zn(2+)-binding residues include cysteine 1091, histidine 1094, cysteine 1099, and cysteine 1102.

Belongs to the ARTD/PARP family. In terms of assembly, interacts (via ANK repeats) with PI31.

It carries out the reaction NAD(+) + (ADP-D-ribosyl)n-acceptor = nicotinamide + (ADP-D-ribosyl)n+1-acceptor + H(+).. It catalyses the reaction L-aspartyl-[protein] + NAD(+) = 4-O-(ADP-D-ribosyl)-L-aspartyl-[protein] + nicotinamide. The catalysed reaction is L-glutamyl-[protein] + NAD(+) = 5-O-(ADP-D-ribosyl)-L-glutamyl-[protein] + nicotinamide. Stimulates proteasome activity, probably by ADP-ribosylation of PI31. Modulates 26S proteasome assembly. The sequence is that of Poly [ADP-ribose] polymerase tankyrase from Drosophila melanogaster (Fruit fly).